We begin with the raw amino-acid sequence, 424 residues long: 3-isopropylmalate dehydratase large subunit 1 (424 aa).

[4Fe-4S] cluster is bound by residues Cys-303, Cys-363, and Cys-366.

The protein belongs to the aconitase/IPM isomerase family. LeuC type 2 subfamily. In terms of assembly, heterodimer of LeuC and LeuD. Requires [4Fe-4S] cluster as cofactor.

The enzyme catalyses (2R,3S)-3-isopropylmalate = (2S)-2-isopropylmalate. It functions in the pathway amino-acid biosynthesis; L-leucine biosynthesis; L-leucine from 3-methyl-2-oxobutanoate: step 2/4. Its function is as follows. Catalyzes the isomerization between 2-isopropylmalate and 3-isopropylmalate, via the formation of 2-isopropylmaleate. The protein is 3-isopropylmalate dehydratase large subunit 1 of Pyrococcus furiosus (strain ATCC 43587 / DSM 3638 / JCM 8422 / Vc1).